The primary structure comprises 831 residues: uncharacterized protein (831 aa).

A disordered region spans residues 285–311 (ALNLKRQQLKEEQKEQQSTGDRSDVST). 470–477 (GDTGNGKS) provides a ligand contact to ATP.

This is an uncharacterized protein from Bacillus subtilis (strain 168).